The following is a 368-amino-acid chain: L-cysteine desulfhydrase Cds1 (368 aa).

An N6-(pyridoxal phosphate)lysine modification is found at K67. Pyridoxal 5'-phosphate-binding positions include 203 to 207 (GTGGT) and S299.

It belongs to the cysteine synthase/cystathionine beta-synthase family. Cds1 subfamily. Pyridoxal 5'-phosphate serves as cofactor.

It localises to the cytoplasm. The catalysed reaction is L-cysteine + H2O = hydrogen sulfide + pyruvate + NH4(+) + H(+). In terms of biological role, a cysteine desulfhydrase that generates hydrogen sulfide, H(2)S. The H(2)S produced by this enzyme stimulates respiration in M.tuberculosis, mediated primarily via cytochrome bd with a lesser contribution from cytochrome bc1/aa3. H(2)S modulates the balance between respiration and glycolysis, and also contributes to redox homeostasis. Probably eliminates toxic levels of Cys (which can induce oxidative stress). The sequence is that of L-cysteine desulfhydrase Cds1 from Mycobacterium tuberculosis (strain ATCC 25177 / H37Ra).